Here is a 149-residue protein sequence, read N- to C-terminus: MRAVVQRVTSSSVKVEDNIVGSIGKGLNVLIGISKSDTLEDLKYIRDKVINLRIFQDEKEKMNLSLLDIKGELLVISQFTLYGDCRKGRRPNFMDAKGGEEAKELYEEFLSLLKESNLKVETGEFGADMKVEINNDGPVTIILDSSKNF.

The Gly-cisPro motif, important for rejection of L-amino acids motif lies at 137-138; sequence GP.

Belongs to the DTD family. As to quaternary structure, homodimer.

It localises to the cytoplasm. It catalyses the reaction glycyl-tRNA(Ala) + H2O = tRNA(Ala) + glycine + H(+). The enzyme catalyses a D-aminoacyl-tRNA + H2O = a tRNA + a D-alpha-amino acid + H(+). Functionally, an aminoacyl-tRNA editing enzyme that deacylates mischarged D-aminoacyl-tRNAs. Also deacylates mischarged glycyl-tRNA(Ala), protecting cells against glycine mischarging by AlaRS. Acts via tRNA-based rather than protein-based catalysis; rejects L-amino acids rather than detecting D-amino acids in the active site. By recycling D-aminoacyl-tRNA to D-amino acids and free tRNA molecules, this enzyme counteracts the toxicity associated with the formation of D-aminoacyl-tRNA entities in vivo and helps enforce protein L-homochirality. The protein is D-aminoacyl-tRNA deacylase of Clostridium botulinum (strain Alaska E43 / Type E3).